The primary structure comprises 351 residues: GDSL esterase/lipase At4g26790 (351 aa).

The signal sequence occupies residues 1 to 25 (MQRNRVLAFLLLAAQLLVKIPETCA). The active-site Nucleophile is Ser-36. Asn-118 is a glycosylation site (N-linked (GlcNAc...) asparagine). Catalysis depends on residues Asp-326 and His-329.

It belongs to the 'GDSL' lipolytic enzyme family.

Its subcellular location is the secreted. In Arabidopsis thaliana (Mouse-ear cress), this protein is GDSL esterase/lipase At4g26790.